The following is a 157-amino-acid chain: Crossover junction endodeoxyribonuclease RuvC (157 aa).

Active-site residues include aspartate 7, glutamate 67, and aspartate 140. Mg(2+) is bound by residues aspartate 7, glutamate 67, and aspartate 140.

Belongs to the RuvC family. As to quaternary structure, homodimer which binds Holliday junction (HJ) DNA. The HJ becomes 2-fold symmetrical on binding to RuvC with unstacked arms; it has a different conformation from HJ DNA in complex with RuvA. In the full resolvosome a probable DNA-RuvA(4)-RuvB(12)-RuvC(2) complex forms which resolves the HJ. It depends on Mg(2+) as a cofactor.

The protein localises to the cytoplasm. The enzyme catalyses Endonucleolytic cleavage at a junction such as a reciprocal single-stranded crossover between two homologous DNA duplexes (Holliday junction).. In terms of biological role, the RuvA-RuvB-RuvC complex processes Holliday junction (HJ) DNA during genetic recombination and DNA repair. Endonuclease that resolves HJ intermediates. Cleaves cruciform DNA by making single-stranded nicks across the HJ at symmetrical positions within the homologous arms, yielding a 5'-phosphate and a 3'-hydroxyl group; requires a central core of homology in the junction. The consensus cleavage sequence is 5'-(A/T)TT(C/G)-3'. Cleavage occurs on the 3'-side of the TT dinucleotide at the point of strand exchange. HJ branch migration catalyzed by RuvA-RuvB allows RuvC to scan DNA until it finds its consensus sequence, where it cleaves and resolves the cruciform DNA. The protein is Crossover junction endodeoxyribonuclease RuvC of Rickettsia massiliae (strain Mtu5).